Consider the following 416-residue polypeptide: Serine/threonine-protein phosphatase PP2A-like PPG1 (416 aa).

4 residues coordinate Mn(2+): Asp-62, His-64, Asp-90, and Asn-122. His-123 acts as the Proton donor in catalysis. Mn(2+)-binding residues include His-173 and His-248. The disordered stretch occupies residues 363–391; sequence EDTLQGKSVNGINFDDELSTSDDTSGSGG.

The protein belongs to the PPP phosphatase family. PP-2A subfamily. Mn(2+) serves as cofactor.

It catalyses the reaction O-phospho-L-seryl-[protein] + H2O = L-seryl-[protein] + phosphate. It carries out the reaction O-phospho-L-threonyl-[protein] + H2O = L-threonyl-[protein] + phosphate. With respect to regulation, inhibited by okadaic acid, a specific inhibitor of serine/threonine phosphatases of types 1, 2A and 2B. Functionally, serine/threonine-protein phosphatase that plays an important role in controlling colony morphology, filament extension and agar invasion. Down-regulates expression of NRG1 and affects the expression of multiple filament-specific transcripts in response to serum and 37 degrees Celsius. Plays a crucial role in virulence in a mouse model of systemic candidiasis. This is Serine/threonine-protein phosphatase PP2A-like PPG1 from Candida albicans (strain SC5314 / ATCC MYA-2876) (Yeast).